The chain runs to 296 residues: Pantothenate synthetase (296 aa).

ATP is bound at residue 37–44 (MGALHTGH). The active-site Proton donor is the histidine 44. A (R)-pantoate-binding site is contributed by glutamine 68. Residue glutamine 68 participates in beta-alanine binding. An ATP-binding site is contributed by 160–163 (GQKD). Glutamine 166 is a (R)-pantoate binding site. ATP-binding positions include valine 189 and 197-200 (TSSR).

Belongs to the pantothenate synthetase family. As to quaternary structure, homodimer.

The protein resides in the cytoplasm. The catalysed reaction is (R)-pantoate + beta-alanine + ATP = (R)-pantothenate + AMP + diphosphate + H(+). Its pathway is cofactor biosynthesis; (R)-pantothenate biosynthesis; (R)-pantothenate from (R)-pantoate and beta-alanine: step 1/1. Its function is as follows. Catalyzes the condensation of pantoate with beta-alanine in an ATP-dependent reaction via a pantoyl-adenylate intermediate. The protein is Pantothenate synthetase of Thermobifida fusca (strain YX).